The sequence spans 182 residues: Ribosome-recycling factor (182 aa).

Belongs to the RRF family.

It localises to the cytoplasm. Functionally, responsible for the release of ribosomes from messenger RNA at the termination of protein biosynthesis. May increase the efficiency of translation by recycling ribosomes from one round of translation to another. This is Ribosome-recycling factor from Prochlorococcus marinus (strain MIT 9312).